A 93-amino-acid polypeptide reads, in one-letter code: Large ribosomal subunit protein uL23cz/uL23cy (93 aa).

It belongs to the universal ribosomal protein uL23 family. As to quaternary structure, part of the 50S ribosomal subunit.

The protein resides in the plastid. The protein localises to the chloroplast. Functionally, binds to 23S rRNA. The sequence is that of Large ribosomal subunit protein uL23cz/uL23cy (rpl23-A) from Phaseolus angularis (Azuki bean).